Here is an 87-residue protein sequence, read N- to C-terminus: Large ribosomal subunit protein bL27 (87 aa).

Belongs to the bacterial ribosomal protein bL27 family.

In Dechloromonas aromatica (strain RCB), this protein is Large ribosomal subunit protein bL27.